The following is a 511-amino-acid chain: MSILWIVAYALLAFAASIALNLVYQFLYRTFNKSRPPLVFHWVPFIGSTIHYGMDPYNFFFSCREKYGDIFTFILLGRPTTVYLGTQGNEFILNGKLKDVNAEEVYSPLTTPVFGSDVVYDCPNSKLIEQKKFIKFGLSQAALEAHVPLIEKEVIDYLAQSPNFNGTAGTVDIASAMAEITIFTAGSTLQGEEVRSKLTTEFAVLYHDLDKGFTPINFMLPWAPLPHNKKRDAAHARMRAIYIDIINKRRKAGNAATGKPDMIENLMQCTYKNGQPLPDKEIAHIMITLLMAGQHSSSSIGSWIMLRLASQPAIVEELYQEQLANLERTANGSLPPLQFKDIENLPLHQNVIRETLRLHGSIHSLLRKVKNPLPVPGTPYIIPTSHVLLSAPGVTALSDEYFPNAMAWDPHRWETQAPEESKEDIVDYGYGAMSKGTSSPYLPFGAGRHRCIGEKFAYLNLTVIVATLVRHLRFHNLDGKKGVPGTDYTSLFSGPLKPTRVGWERRAAKSA.

Residues 3–23 (ILWIVAYALLAFAASIALNLV) traverse the membrane as a helical segment. Residue cysteine 451 coordinates heme.

It belongs to the cytochrome P450 family. The cofactor is heme.

The protein resides in the membrane. It carries out the reaction a 14alpha-methyl steroid + 3 reduced [NADPH--hemoprotein reductase] + 3 O2 = a Delta(14) steroid + formate + 3 oxidized [NADPH--hemoprotein reductase] + 4 H2O + 4 H(+). The enzyme catalyses a 14alpha-methyl steroid + reduced [NADPH--hemoprotein reductase] + O2 = a 14alpha-hydroxymethyl steroid + oxidized [NADPH--hemoprotein reductase] + H2O + H(+). The catalysed reaction is a 14alpha-hydroxymethyl steroid + reduced [NADPH--hemoprotein reductase] + O2 = a 14alpha-formyl steroid + oxidized [NADPH--hemoprotein reductase] + 2 H2O + H(+). It catalyses the reaction a 14alpha-formyl steroid + reduced [NADPH--hemoprotein reductase] + O2 = a Delta(14) steroid + formate + oxidized [NADPH--hemoprotein reductase] + H2O + 2 H(+). It carries out the reaction lanosterol + 3 reduced [NADPH--hemoprotein reductase] + 3 O2 = 4,4-dimethyl-5alpha-cholesta-8,14,24-trien-3beta-ol + formate + 3 oxidized [NADPH--hemoprotein reductase] + 4 H2O + 4 H(+). The enzyme catalyses lanosterol + reduced [NADPH--hemoprotein reductase] + O2 = 32-hydroxylanosterol + oxidized [NADPH--hemoprotein reductase] + H2O + H(+). The catalysed reaction is 32-hydroxylanosterol + reduced [NADPH--hemoprotein reductase] + O2 = 32-oxolanosterol + oxidized [NADPH--hemoprotein reductase] + 2 H2O + H(+). It catalyses the reaction 32-oxolanosterol + reduced [NADPH--hemoprotein reductase] + O2 = 4,4-dimethyl-5alpha-cholesta-8,14,24-trien-3beta-ol + formate + oxidized [NADPH--hemoprotein reductase] + H2O + 2 H(+). It carries out the reaction eburicol + 3 reduced [NADPH--hemoprotein reductase] + 3 O2 = 14-demethyleburicol + formate + 3 oxidized [NADPH--hemoprotein reductase] + 4 H2O + 4 H(+). The enzyme catalyses eburicol + reduced [NADPH--hemoprotein reductase] + O2 = 32-hydroxyeburicol + oxidized [NADPH--hemoprotein reductase] + H2O + H(+). The catalysed reaction is 32-hydroxyeburicol + reduced [NADPH--hemoprotein reductase] + O2 = 32-oxoeburicol + oxidized [NADPH--hemoprotein reductase] + 2 H2O + H(+). It catalyses the reaction 32-oxoeburicol + reduced [NADPH--hemoprotein reductase] + O2 = 14-demethyleburicol + formate + oxidized [NADPH--hemoprotein reductase] + H2O + 2 H(+). Sterol 14-alpha demethylase; part of the gene cluster that mediates the biosynthesis of the tetrahydropyranyl antifungal agent restricticin that acts as an inhibitor of CYP51 and blocks the ergosterol biosynthesis. Sterol 14-alpha-demethylase plays a critical role in the biosynthesis of ergosterol, the major sterol component in fungal membranes that participates in a variety of functions. ResB acts as a self-resistant CYP51 that contains mutations found in CYP51s isolated from azole resistance strains and that is not inhibited by the final product of the cluster, restricticin. The polypeptide is Sterol 14-alpha demethylase resB (Aspergillus sclerotiorum).